The following is a 551-amino-acid chain: L-lactate permease (551 aa).

Helical transmembrane passes span 13–33 (NIWLSSLIASLPILFFFFALI), 37–57 (LKGYVAASWTVAIALAVALLF), 69–89 (VVYGFFYGLWPIAWIIIAAVF), 131–151 (GAAGFGAPVAITAALLVGLGF), 159–179 (LCLIVNTAPVAFGAMGIPILV), 194–214 (MVGRQLPFMTIIVLFWIMAIM), 220–240 (IKETWPAVVVAGGSFAIAQYL), 244–264 (FIGPELPDIISSLVSLLCLTL), 366–386 (FDWFSATGTAILFAALLSIVW), 405–425 (LALPIYSIGMVLAFAFISNYS), 438–458 (TGHAFTFFSPFLGWLGVFLTG), 494–514 (VTGKMISPQSIAIACAAVGLV), and 530–550 (IFTCIVGVITTLQAYVLTWMI).

This sequence belongs to the lactate permease family.

The protein resides in the cell inner membrane. It carries out the reaction (S)-lactate(in) + H(+)(in) = (S)-lactate(out) + H(+)(out). The enzyme catalyses (R)-lactate(in) + H(+)(in) = (R)-lactate(out) + H(+)(out). The catalysed reaction is glycolate(in) + H(+)(in) = glycolate(out) + H(+)(out). Its activity is regulated as follows. Inhibited by the proton ionophore carbonyl cyanide m-chlorophenylhydrazone (CCCP). In terms of biological role, uptake of L-lactate across the membrane. Can also transport D-lactate and glycolate. Seems to be driven by a proton motive force. This Escherichia coli (strain K12) protein is L-lactate permease.